Here is a 267-residue protein sequence, read N- to C-terminus: Acyl-[acyl-carrier-protein]--UDP-N-acetylglucosamine O-acyltransferase (267 aa).

It belongs to the transferase hexapeptide repeat family. LpxA subfamily. As to quaternary structure, homotrimer.

It is found in the cytoplasm. It catalyses the reaction a (3R)-hydroxyacyl-[ACP] + UDP-N-acetyl-alpha-D-glucosamine = a UDP-3-O-[(3R)-3-hydroxyacyl]-N-acetyl-alpha-D-glucosamine + holo-[ACP]. It functions in the pathway glycolipid biosynthesis; lipid IV(A) biosynthesis; lipid IV(A) from (3R)-3-hydroxytetradecanoyl-[acyl-carrier-protein] and UDP-N-acetyl-alpha-D-glucosamine: step 1/6. Its function is as follows. Involved in the biosynthesis of lipid A, a phosphorylated glycolipid that anchors the lipopolysaccharide to the outer membrane of the cell. The polypeptide is Acyl-[acyl-carrier-protein]--UDP-N-acetylglucosamine O-acyltransferase (Hamiltonella defensa subsp. Acyrthosiphon pisum (strain 5AT)).